Consider the following 608-residue polypeptide: Probable adenylate kinase 5, chloroplastic (608 aa).

Low complexity predominate over residues 1-20; the sequence is MAASSSSSSPAAASAPFAAP. Residues 1–44 form a disordered region; the sequence is MAASSSSSSPAAASAPFAAPGPHRRPGLALRPSPPTPPSSSLSC. The N-terminal 75 residues, 1–75, are a transit peptide targeting the chloroplast; the sequence is MAASSSSSSP…GPRGMGLRCR (75 aa). 99 to 104 is a binding site for ATP; it reads ASGKGT. The segment at 119 to 148 is NMP; sequence STGDLLRAEVSSGTEIGKKAKEYMDNGMLV. Residues T120, R125, 146–148, 175–178, and Q182 each bind AMP; these read MLV and GYPR. Residues R209, R213, and 222 to 223 contribute to the ATP site; that span reads IY. An LID region spans residues 212–245; that stretch reads GRRLDPETGKIYHIKNFPPENDEVSARLVTRSDD. The AMP site is built by R242 and R253.

This sequence belongs to the adenylate kinase family.

Its subcellular location is the plastid. The protein resides in the chloroplast. It carries out the reaction AMP + ATP = 2 ADP. In terms of biological role, catalyzes the reversible transfer of the terminal phosphate group between ATP and AMP. Plays an important role in cellular energy homeostasis and in adenine nucleotide metabolism. The protein is Probable adenylate kinase 5, chloroplastic of Oryza sativa subsp. japonica (Rice).